The sequence spans 59 residues: Large ribosomal subunit protein bL32 (59 aa).

Residues 1–16 show a composition bias toward basic residues; it reads MAVPKRKTSPSRRGMR. A disordered region spans residues 1–20; the sequence is MAVPKRKTSPSRRGMRRSHD.

Belongs to the bacterial ribosomal protein bL32 family.

The polypeptide is Large ribosomal subunit protein bL32 (Novosphingobium aromaticivorans (strain ATCC 700278 / DSM 12444 / CCUG 56034 / CIP 105152 / NBRC 16084 / F199)).